Here is a 247-residue protein sequence, read N- to C-terminus: Phosphoribosylaminoimidazole-succinocarboxamide synthase (247 aa).

The protein belongs to the SAICAR synthetase family.

The enzyme catalyses 5-amino-1-(5-phospho-D-ribosyl)imidazole-4-carboxylate + L-aspartate + ATP = (2S)-2-[5-amino-1-(5-phospho-beta-D-ribosyl)imidazole-4-carboxamido]succinate + ADP + phosphate + 2 H(+). It functions in the pathway purine metabolism; IMP biosynthesis via de novo pathway; 5-amino-1-(5-phospho-D-ribosyl)imidazole-4-carboxamide from 5-amino-1-(5-phospho-D-ribosyl)imidazole-4-carboxylate: step 1/2. This is Phosphoribosylaminoimidazole-succinocarboxamide synthase from Herpetosiphon aurantiacus (strain ATCC 23779 / DSM 785 / 114-95).